A 170-amino-acid polypeptide reads, in one-letter code: Methanogen homoaconitase small subunit (170 aa).

Residues 26-29 carry the YLRT motif; sequence YLRT.

Belongs to the LeuD family. LeuD type 2 subfamily. Heterotetramer of 2 HacA and 2 HacB proteins.

It carries out the reaction (2R)-homocitrate = (2R,3S)-homoisocitrate. The catalysed reaction is (2R)-homocitrate = cis-homoaconitate + H2O. The enzyme catalyses (2R,3S)-homoisocitrate = cis-homoaconitate + H2O. It catalyses the reaction cis-(homo)2aconitate + H2O = (2R,3S)-iso(homo)2citrate. It carries out the reaction cis-(homo)3aconitate + H2O = (2R,3S)-iso(homo)3citrate. Its pathway is organic acid metabolism; 2-oxosuberate biosynthesis. Its function is as follows. Component of a hydro-lyase with broad substrate specificity for cis-unsaturated tricarboxylic acids. Catalyzes both the reversible dehydration of (R)-homocitrate ((R)-2-hydroxybutane-1,2,4-tricarboxylate) to produce cis-homoaconitate ((Z)-but-1-ene-1,2,4-tricarboxylate), and its hydration to homoisocitrate ((1R,2S)-1-hydroxybutane-1,2,4-tricarboxylate). Is also able to hydrate the analogous longer chain substrates cis-homo(2)-aconitate, cis-homo(3)-aconitate. These reactions are part of the biosynthesis pathway of coenzyme B. This Methanothermobacter thermautotrophicus (strain ATCC 29096 / DSM 1053 / JCM 10044 / NBRC 100330 / Delta H) (Methanobacterium thermoautotrophicum) protein is Methanogen homoaconitase small subunit (hacB).